A 217-amino-acid polypeptide reads, in one-letter code: Probable GTP-binding protein EngB (217 aa).

The EngB-type G domain occupies Gly29–Val213. Residues Gly37–Ser44, Gly64–Glu68, Asp91–Gly94, Thr158–Asp161, and Thr192–Ser194 each bind GTP. Mg(2+) contacts are provided by Ser44 and Thr66.

Belongs to the TRAFAC class TrmE-Era-EngA-EngB-Septin-like GTPase superfamily. EngB GTPase family. Requires Mg(2+) as cofactor.

In terms of biological role, necessary for normal cell division and for the maintenance of normal septation. The chain is Probable GTP-binding protein EngB from Rhizobium leguminosarum bv. trifolii (strain WSM2304).